The sequence spans 284 residues: 2-dehydro-3-deoxyphosphooctonate aldolase (284 aa).

Belongs to the KdsA family.

The protein resides in the cytoplasm. It catalyses the reaction D-arabinose 5-phosphate + phosphoenolpyruvate + H2O = 3-deoxy-alpha-D-manno-2-octulosonate-8-phosphate + phosphate. The protein operates within carbohydrate biosynthesis; 3-deoxy-D-manno-octulosonate biosynthesis; 3-deoxy-D-manno-octulosonate from D-ribulose 5-phosphate: step 2/3. Its pathway is bacterial outer membrane biogenesis; lipopolysaccharide biosynthesis. The polypeptide is 2-dehydro-3-deoxyphosphooctonate aldolase (Citrobacter koseri (strain ATCC BAA-895 / CDC 4225-83 / SGSC4696)).